Here is a 36-residue protein sequence, read N- to C-terminus: Phosphoglycerate kinase, chloroplastic (36 aa).

3 residues coordinate (2R)-3-phosphoglycerate: Ala22, Asp23, and Asn25.

It belongs to the phosphoglycerate kinase family. In terms of assembly, monomer. Mg(2+) serves as cofactor.

The protein localises to the plastid. It is found in the chloroplast. The enzyme catalyses (2R)-3-phosphoglycerate + ATP = (2R)-3-phospho-glyceroyl phosphate + ADP. It functions in the pathway carbohydrate biosynthesis; Calvin cycle. The polypeptide is Phosphoglycerate kinase, chloroplastic (Scenedesmus fuscus (Green alga)).